The sequence spans 417 residues: Glucose-1-phosphate adenylyltransferase (417 aa).

Alpha-D-glucose 1-phosphate is bound by residues Tyr98, Gly163, 178–179, and Ser197; that span reads EK.

This sequence belongs to the bacterial/plant glucose-1-phosphate adenylyltransferase family. In terms of assembly, homotetramer.

It carries out the reaction alpha-D-glucose 1-phosphate + ATP + H(+) = ADP-alpha-D-glucose + diphosphate. Its pathway is glycan biosynthesis; glycogen biosynthesis. Its function is as follows. Involved in the biosynthesis of ADP-glucose, a building block required for the elongation reactions to produce glycogen. Catalyzes the reaction between ATP and alpha-D-glucose 1-phosphate (G1P) to produce pyrophosphate and ADP-Glc. This is Glucose-1-phosphate adenylyltransferase from Koribacter versatilis (strain Ellin345).